A 313-amino-acid polypeptide reads, in one-letter code: MDFELFILGSSSATPSKGRYQSAQLLKIHNDYFMIDCGEAAQYQLSRYKLNHTKISHIFISHLHGDHFFGLVGLLSTMNLYGRKNPIHVFGPPGLDEIIQIQLKYSETLLQFPLHYTTLENEGSEHILDHPLVDVYTIPLEHRIRCNGFLFKEKPKSYKLNKSKLPEDLSLLEIAQLKQGIDVYDENGNVKALVREICMPALKSRSYAYCSDTKVNEQYFPYIKGVDLLYHESTFLDELADRAAKTYHTTAKQAAQVAKEAEAGKLIIGHFSSRYYDTEPFLLEASSIFKHTYLGTEGSSFYVSDRISHEDNS.

The Zn(2+) site is built by histidine 62, histidine 64, aspartate 66, histidine 67, histidine 142, aspartate 212, and histidine 270. Residue aspartate 66 is the Proton acceptor of the active site.

It belongs to the RNase Z family. Homodimer. Requires Zn(2+) as cofactor.

It carries out the reaction Endonucleolytic cleavage of RNA, removing extra 3' nucleotides from tRNA precursor, generating 3' termini of tRNAs. A 3'-hydroxy group is left at the tRNA terminus and a 5'-phosphoryl group is left at the trailer molecule.. Its function is as follows. Zinc phosphodiesterase, which displays some tRNA 3'-processing endonuclease activity. Probably involved in tRNA maturation, by removing a 3'-trailer from precursor tRNA. This is Ribonuclease Z from Cytophaga hutchinsonii (strain ATCC 33406 / DSM 1761 / CIP 103989 / NBRC 15051 / NCIMB 9469 / D465).